The sequence spans 410 residues: Venom metalloproteinase 2 (410 aa).

The signal sequence occupies residues 1-22 (MDTFILTYSILFLALFIESIHS). Asn-64, Asn-112, Asn-187, Asn-231, Asn-292, and Asn-307 each carry an N-linked (GlcNAc...) asparagine glycan. A Peptidase M12B domain is found at 214–410 (FYPKLLVLVD…NNNVSKFIWS (197 aa)). His-365 serves as a coordination point for Zn(2+). The active site involves Glu-366. His-369 and His-375 together coordinate Zn(2+). N-linked (GlcNAc...) asparagine glycosylation occurs at Asn-403.

The protein in the C-terminal section; belongs to the venom metalloproteinase (M12B) family. In terms of assembly, monomer. Zn(2+) serves as cofactor. In terms of tissue distribution, expressed by the venom gland.

It is found in the secreted. Its activity is regulated as follows. The gelatinase activity is inhibited by EDTA. The recombinant protein has gelatinase activity. In vivo, injection of this recombinant into fifth instar L.oleracea (host) larvae results in partial insect mortality associated with the molt to sixth instar, with surviving insects showing retarded development and growth. The sequence is that of Venom metalloproteinase 2 from Eulophus pennicornis (Parasitoid wasp).